The primary structure comprises 649 residues: Choline transporter-like protein 3 (649 aa).

Residues 33-53 (AWLFLFFLFWTGLVFIMGYSV) traverse the membrane as a helical segment. N-linked (GlcNAc...) asparagine glycosylation is found at Asn136 and Asn151. The next 5 membrane-spanning stretches (helical) occupy residues 213–233 (DTVLGLCILAFALSLAMMFTF), 235–255 (FITTLLVHIFIALIVLGLLFV), 284–304 (LLGFAIVSTVITAVLLILIYV), 334–354 (LWTFAILIFFWVLWVAVLLSL), and 384–404 (LIGLIWTSEFILACQQMAVAG). Residues Asn414, Asn502, and Asn520 are each glycosylated (N-linked (GlcNAc...) asparagine). 2 helical membrane passes run 533 to 553 (FIIFLGKVLVVCFTVFGGLMA) and 562 to 582 (VWAVPLLLVAFFAYLVAHSFL).

This sequence belongs to the CTL (choline transporter-like) family.

It is found in the membrane. The chain is Choline transporter-like protein 3 (SLC44A3) from Bos taurus (Bovine).